The primary structure comprises 605 residues: Elongation factor 4 (605 aa).

The 183-residue stretch at 11 to 193 (KNIRNFSIIA…RLVDVIPAPE (183 aa)) folds into the tr-type G domain. Residues 23-28 (DHGKST) and 140-143 (NKID) contribute to the GTP site.

Belongs to the TRAFAC class translation factor GTPase superfamily. Classic translation factor GTPase family. LepA subfamily.

It is found in the cell inner membrane. It carries out the reaction GTP + H2O = GDP + phosphate + H(+). Its function is as follows. Required for accurate and efficient protein synthesis under certain stress conditions. May act as a fidelity factor of the translation reaction, by catalyzing a one-codon backward translocation of tRNAs on improperly translocated ribosomes. Back-translocation proceeds from a post-translocation (POST) complex to a pre-translocation (PRE) complex, thus giving elongation factor G a second chance to translocate the tRNAs correctly. Binds to ribosomes in a GTP-dependent manner. The sequence is that of Elongation factor 4 from Acinetobacter baylyi (strain ATCC 33305 / BD413 / ADP1).